The chain runs to 672 residues: Glycine--tRNA ligase beta subunit (672 aa).

The protein belongs to the class-II aminoacyl-tRNA synthetase family. As to quaternary structure, tetramer of two alpha and two beta subunits.

Its subcellular location is the cytoplasm. The enzyme catalyses tRNA(Gly) + glycine + ATP = glycyl-tRNA(Gly) + AMP + diphosphate. The polypeptide is Glycine--tRNA ligase beta subunit (Thermotoga petrophila (strain ATCC BAA-488 / DSM 13995 / JCM 10881 / RKU-1)).